The primary structure comprises 220 residues: PRA1 family protein B4 (220 aa).

Positions 1–27 are disordered; the sequence is MASSAPPVLPISNPQTVPSAAPSSVES. The segment covering 12–27 has biased composition (polar residues); that stretch reads SNPQTVPSAAPSSVES. Transmembrane regions (helical) follow at residues 83-103, 105-125, 146-166, 170-190, and 196-216; these read YSYF…FSLV, HPFS…LYLF, GCLI…SVLV, MIGV…DLFL, and AATG…PAVI.

The protein belongs to the PRA1 family. In terms of assembly, interacts with PRA1B1, PRA1B2, PRA1B3, PRA1B5, PRA1B6 and PRA1E. Expressed in roots, lateral roots, lateral root caps, stomata and trichomes.

It localises to the endosome membrane. Functionally, may be involved in both secretory and endocytic intracellular trafficking in the endosomal/prevacuolar compartments. In Arabidopsis thaliana (Mouse-ear cress), this protein is PRA1 family protein B4 (PRA1B4).